We begin with the raw amino-acid sequence, 347 residues long: Probable zinc transporter 8 (347 aa).

The first 27 residues, 1 to 27, serve as a signal peptide directing secretion; it reads MATTTQHMNQIFLVLLLISFAISPAIS. Topologically, residues 28-51 are extracellular; it reads TVPKECETDSTDSCIDKTKALPLK. A helical transmembrane segment spans residues 52-72; the sequence is IVAIVAILVTSMIGVAAPLFS. Residues 73–83 lie on the Cytoplasmic side of the membrane; it reads RYVTFLHPDGK. A helical membrane pass occupies residues 84-104; that stretch reads IFMIIKCFASGIILGTGFMHV. Topologically, residues 105–124 are extracellular; that stretch reads LPDSFEMLSSPCLEDNPWHK. Residues 125-145 traverse the membrane as a helical segment; the sequence is FPFTGFVAMLSGLVTLAIDSI. The Cytoplasmic segment spans residues 146–192; that stretch reads ATSLYTKKAVADDSEERTTPMIIQIDHLPLTTKERSSTCSKQLLRYR. The chain crosses the membrane as a helical span at residues 193 to 213; sequence VIATVLELGIIVHSVVIGLSL. Residues 214–224 lie on the Extracellular side of the membrane; sequence GATNDTCTIKG. Residues 225–245 form a helical membrane-spanning segment; the sequence is LIAALCFHQMFEGMGLGGCIL. Over 246-254 the chain is Cytoplasmic; the sequence is QAEYTNVKK. A helical transmembrane segment spans residues 255-275; the sequence is FVMAFFFAVTTPSGIALGIAL. At 276–286 the chain is on the extracellular side; it reads SSVYKDNSPTA. Residues 287 to 307 form a helical membrane-spanning segment; the sequence is LITVGLLNACSAGLLIYMALV. Over 308–326 the chain is Cytoplasmic; sequence DLLAAEFMGSMLQRSVKLQ. The chain crosses the membrane as a helical span at residues 327 to 347; sequence LNCFGAALLGCGGMSVLAKWA.

It belongs to the ZIP transporter (TC 2.A.5) family.

The protein localises to the cell membrane. Functionally, probably mediates zinc uptake from the rhizosphere. In Arabidopsis thaliana (Mouse-ear cress), this protein is Probable zinc transporter 8 (ZIP8).